Reading from the N-terminus, the 132-residue chain is MSAATDQILEQLKSLTLLEASELVKQIEEAFGVSAAAPVGGGMMMMAPGGAAPAAAEPEEEKTEFDVVLEDVPADKKIAILKVVRAITGLGLKEAKDLVESAPKPIKEATNKDDAESIKKQLEEAGAKASVK.

The segment covering 102–126 (APKPIKEATNKDDAESIKKQLEEAG) has biased composition (basic and acidic residues). The tract at residues 102-132 (APKPIKEATNKDDAESIKKQLEEAGAKASVK) is disordered.

Belongs to the bacterial ribosomal protein bL12 family. Homodimer. Part of the ribosomal stalk of the 50S ribosomal subunit. Forms a multimeric L10(L12)X complex, where L10 forms an elongated spine to which 2 to 4 L12 dimers bind in a sequential fashion. Binds GTP-bound translation factors.

Forms part of the ribosomal stalk which helps the ribosome interact with GTP-bound translation factors. Is thus essential for accurate translation. In Rippkaea orientalis (strain PCC 8801 / RF-1) (Cyanothece sp. (strain PCC 8801)), this protein is Large ribosomal subunit protein bL12.